A 146-amino-acid polypeptide reads, in one-letter code: Hemoglobin subunit beta (146 aa).

Residue Val1 is modified to N-acetylvaline. The region spanning His2–His146 is the Globin domain. Phosphothreonine is present on Thr12. Ser44 is modified (phosphoserine). Lys59 carries the post-translational modification N6-acetyllysine. A heme b-binding site is contributed by His63. The residue at position 82 (Lys82) is an N6-acetyllysine. Residue His92 participates in heme b binding. The residue at position 93 (Cys93) is an S-nitrosocysteine. Lys144 is subject to N6-acetyllysine.

Belongs to the globin family. Heterotetramer of two alpha chains and two beta chains. Red blood cells.

Functionally, involved in oxygen transport from the lung to the various peripheral tissues. This chain is Hemoglobin subunit beta (HBB), found in Aotus trivirgatus (Three-striped night monkey).